Consider the following 220-residue polypeptide: PKHD-type hydroxylase sync_1544 (220 aa).

The Fe2OG dioxygenase domain occupies 79-173 (KLHRFLISKT…RTVCVGWIES (95 aa)). Residues histidine 97, aspartate 99, and histidine 154 each coordinate Fe cation. Position 164 (arginine 164) interacts with 2-oxoglutarate.

The cofactor is Fe(2+). L-ascorbate serves as cofactor.

This chain is PKHD-type hydroxylase sync_1544, found in Synechococcus sp. (strain CC9311).